The sequence spans 220 residues: Small ribosomal subunit protein eS8 (220 aa).

Disordered stretches follow at residues 1 to 41 (MGIS…LSSN) and 131 to 151 (AKKDAEGQDAEATTEEAKKSN). Residues 8-26 (MHKRRATGGKQKAWRKKRK) are compositionally biased toward basic residues.

It belongs to the eukaryotic ribosomal protein eS8 family.

This Oryza sativa subsp. japonica (Rice) protein is Small ribosomal subunit protein eS8 (RPS8).